The sequence spans 275 residues: Rhamnulose-1-phosphate aldolase (275 aa).

Residue E117 is part of the active site. Zn(2+) contacts are provided by H141, H143, and H212.

The protein belongs to the aldolase class II family. RhaD subfamily. In terms of assembly, homotetramer. Zn(2+) is required as a cofactor.

Its subcellular location is the cytoplasm. It carries out the reaction L-rhamnulose 1-phosphate = (S)-lactaldehyde + dihydroxyacetone phosphate. The protein operates within carbohydrate degradation; L-rhamnose degradation; glycerone phosphate from L-rhamnose: step 3/3. Functionally, catalyzes the reversible cleavage of L-rhamnulose-1-phosphate to dihydroxyacetone phosphate (DHAP) and L-lactaldehyde. The protein is Rhamnulose-1-phosphate aldolase of Salmonella choleraesuis (strain SC-B67).